The primary structure comprises 561 residues: MYDRAPRWLDCANRGSTEEHVGPGTYQVPFPKQQATGCYAPFLSLSSKTSACVVSSDAGQAVPGPAHYNVSQAQYNIRGGRSLQNREKRFKKLISDGPGPGSYNWPYLGTLCITTRQKTPRTPAVSRNIDIPSIPSSGKSHGYHLNDDDTIMRRTPPPSDNTIGPAYYNPQFDYPKASLKYKGVNFGNATGRQEFLKYSGPGPGQYDIIQKRKLHCENINIKREQEHNYYTYVPRLYEAIILQEEKKGVPGPGKYNIKSEFDMIKSMSALVNSPSFIFFSETERFEPIKSCTPAPGTYNEIRTAFKCPKKRFGLSLPFNQSAARFTEDSKAQKLPGPGFYDISTNIVKAQVKKPCLKKQPKTGFGSSVPRTLFTAQKKAFRGPGPSDYQVRGTHDELPNLNKSAAFLSRAEKTPPVRKMRLPAPGRYDVQKSYDMSQVKHKYMPPRTSVAKKRHSSFLSAAPRCLGKIADGPGPATYSPVLMKSGAIISFVKGPKRFQEFHGEFSPGPTTYELSPFLRHSLLKRTYNVTLPCSSSPNRENTGCPSQKATQKFQREKLQYFN.

STPGR repeat units lie at residues valine 21 to glutamine 34, proline 63 to glutamine 72, and glycine 97 to asparagine 104. The segment at proline 123 to tyrosine 143 is disordered. 7 STPGR repeats span residues glycine 164–glycine 191, glycine 200–glutamine 210, proline 250–phenylalanine 285, threonine 292–asparagine 299, leucine 334–serine 367, leucine 421–valine 438, and glycine 471–leucine 481.

In Mus musculus (Mouse), this protein is Sperm-tail PG-rich repeat-containing protein 2 (Stpg2).